The primary structure comprises 477 residues: Proline--tRNA ligase (477 aa).

The protein belongs to the class-II aminoacyl-tRNA synthetase family. ProS type 3 subfamily. In terms of assembly, homodimer.

It localises to the cytoplasm. It carries out the reaction tRNA(Pro) + L-proline + ATP = L-prolyl-tRNA(Pro) + AMP + diphosphate. Catalyzes the attachment of proline to tRNA(Pro) in a two-step reaction: proline is first activated by ATP to form Pro-AMP and then transferred to the acceptor end of tRNA(Pro). This is Proline--tRNA ligase from Lachnoclostridium phytofermentans (strain ATCC 700394 / DSM 18823 / ISDg) (Clostridium phytofermentans).